The following is a 30-amino-acid chain: APQDLSGKMFIFPQETSTANVXLTARSQDF.

The Pentraxin (PTX) domain occupies alanine 1 to phenylalanine 30.

This sequence belongs to the pentraxin family. Homopentamer. Discoid arrangement of 5 covalently bound subunits. It depends on Ca(2+) as a cofactor.

It is found in the secreted. In Anarhichas lupus (Atlantic wolffish), this protein is Serum amyloid P-component.